We begin with the raw amino-acid sequence, 309 residues long: Protein FdhE (309 aa).

The protein belongs to the FdhE family.

It is found in the cytoplasm. Necessary for formate dehydrogenase activity. The protein is Protein FdhE of Escherichia coli O9:H4 (strain HS).